A 460-amino-acid chain; its full sequence is MALPGSLNRYLLLMAQEHLEFRLPEIKSLLSVIGGQFTNSQETYGKSPFWILNIPSEDIARNLMKRTVCAKSIFELWGHGKSPEELYTSLKSYPVEKMVPYLHSDSTYKIKIHTFNKTLTQEEKVKRIDALEFLPFQGKVNLKKPQHVFSILEDYGLDPNSIPKDPHNIYFGRWIADGQRELIESYSVKKRHFIGNTSMDAGLSFIMTNHAKVKENDLVFDPFVGTGGLLIASAHFGAYVCGTDIDYNTVHGLGKASRKNQKWRGPDENIRANLRQYGLEKFYLDVLVSDASKPSWRKGTYFDAIITDPPYGIRESTRRSGSQKDIPKGIEKCPESHVPVSLSYHLSDMFFDLLNFAAETLVLGGRLVYWLPVYTPEYTEEMVPWHPCLRLISNCEQKLSSHTARRLITMEKVKEFENRDKYSHLLSDHFLPYQGHNSFREKYFSGVTKRIAKEEKCSHE.

A2 is modified (N-acetylalanine).

The protein belongs to the class I-like SAM-binding methyltransferase superfamily. TRM11 methyltransferase family. As to quaternary structure, part of the heterodimeric TRMT11-TRM112 methyltransferase complex; this complex forms an active tRNA methyltransferase, where TRMT112 acts as an activator of the catalytic subunit TRMT11.

It localises to the cytoplasm. The catalysed reaction is guanosine(10) in tRNA + S-adenosyl-L-methionine = N(2)-methylguanosine(10) in tRNA + S-adenosyl-L-homocysteine + H(+). Catalytic subunit of the TRMT11-TRM112 methyltransferase complex, that specifically mediates the S-adenosyl-L-methionine-dependent N(2)-methylation of guanosine nucleotide at position 10 (m2G10) in tRNAs. This is one of the major tRNA (guanine-N(2))-methyltransferases. In Mus musculus (Mouse), this protein is tRNA (guanine(10)-N(2))-methyltransferase TRMT11.